A 328-amino-acid polypeptide reads, in one-letter code: Malate dehydrogenase 2 (328 aa).

Position 12-18 (Gly12–Ala18) interacts with NAD(+). Residues Arg93 and Arg99 each contribute to the substrate site. Residues Asn106, Gln113, and Val130–Asn132 each bind NAD(+). The substrate site is built by Asn132 and Arg163. His188 (proton acceptor) is an active-site residue.

The protein belongs to the LDH/MDH superfamily. MDH type 2 family.

The catalysed reaction is (S)-malate + NAD(+) = oxaloacetate + NADH + H(+). In terms of biological role, catalyzes the reversible oxidation of malate to oxaloacetate. The sequence is that of Malate dehydrogenase 2 from Burkholderia vietnamiensis (strain G4 / LMG 22486) (Burkholderia cepacia (strain R1808)).